A 183-amino-acid chain; its full sequence is Mitochondrial inner membrane protease subunit 2 (183 aa).

Residues 13–35 (AFVSGFFVAVPVTVTVLDRLAYV) traverse the membrane as a helical segment. Catalysis depends on residues Ser42 and Lys90. Residues 161–183 (SVPPDRRPLLNWDRAAEDKYDDD) are disordered. A compositionally biased stretch (basic and acidic residues) spans 164–183 (PDRRPLLNWDRAAEDKYDDD).

This sequence belongs to the peptidase S26 family. IMP2 subfamily. In terms of assembly, heterodimer of 2 subunits, IMMPL1 and IMMPL2.

The protein resides in the mitochondrion inner membrane. Functionally, catalyzes the removal of transit peptides required for the targeting of proteins from the mitochondrial matrix, across the inner membrane, into the inter-membrane space. This Danio rerio (Zebrafish) protein is Mitochondrial inner membrane protease subunit 2 (immp2l).